The chain runs to 772 residues: Protocadherin beta-6 (772 aa).

The signal sequence occupies residues 1 to 28 (METTLAKTPEKRQVVFLAILLLLWEAGS). Cadherin domains follow at residues 31–133 (IRYS…SPEF), 134–242 (PDTE…APEF), 243–346 (VQSL…APKL), 347–450 (TISS…APAF), and 451–560 (TQTS…APFI). Over 31–690 (IRYSIPEETE…QDEDMLTLYL (660 aa)) the chain is Extracellular. Cysteines 96 and 102 form a disulfide. An N-linked (GlcNAc...) asparagine glycan is attached at N169. A glycan (O-linked (Man) serine) is linked at S223. O-linked (Man) threonine glycosylation is present at T225. The N-linked (GlcNAc...) asparagine glycan is linked to N417. Residue N566 is glycosylated (N-linked (GlcNAc...) asparagine). A Cadherin 6 domain is found at 575 to 675 (LPRAAEPGYL…SQPYLPLPEV (101 aa)). The helical transmembrane segment at 691-711 (VIALASVSSLFLLSVLLFVGV) threads the bilayer. Residues 712-772 (RLCRRVREAS…DFKFLNHYSQ (61 aa)) are Cytoplasmic-facing.

In terms of assembly, forms homodimers in trans (molecules expressed by two different cells). Forms promiscuous heterodimers in cis (at the plasma membrane of the same cell) with other protocadherins.

The protein resides in the cell membrane. Calcium-dependent cell-adhesion protein involved in cells self-recognition and non-self discrimination. Thereby, it is involved in the establishment and maintenance of specific neuronal connections in the brain. This is Protocadherin beta-6 from Mus musculus (Mouse).